The chain runs to 263 residues: 7beta-hydroxysteroid dehydrogenase (263 aa).

NADP(+)-binding positions include T17–G21, R40–R41, and D66–F67. Y156 acts as the Proton acceptor in catalysis. Residue S240 participates in NADP(+) binding.

Belongs to the short-chain dehydrogenases/reductases (SDR) family. Homodimer.

The catalysed reaction is a 7beta-hydroxysteroid + NADP(+) = a 7-oxosteroid + NADPH + H(+). It carries out the reaction 7-oxolithocholate + NADPH + H(+) = ursodeoxycholate + NADP(+). It catalyses the reaction 7beta-hydroxy-3,12-dioxo-5beta-cholan-24-oate + NADP(+) = dehydrocholate + NADPH + H(+). The enzyme catalyses ursocholate + NADP(+) = 3alpha,12alpha-dihydroxy-7-oxo-5beta-cholanate + NADPH + H(+). Functionally, 7beta-hydroxysteroid dehydrogenase that catalyzes the reduction of the 7-oxo group of 7-oxo-lithocholate (7-oxo-LCA), to yield ursodeoxycholate (UDCA). As C.aerofaciens is an intestinal bacterium, this enzyme probably contributes to the formation of UDCA in the human colon. UDCA is regarded as a chemopreventive beneficial secondary bile acid due to its low hydrophobicity; it protects hepatocytes and bile duct epithelial cells against necrosis and apoptosis induced by more hydrophobic secondary bile acids like deoxycholate (DCA). This enzyme is also able to catalyze the reverse reaction, i.e. the oxidation of the 7beta-hydroxy group of UDCA to 7-oxo-LCA. To a lesser extent, is also active on the taurine- and glycine-conjugates of ursodeoxycholate. It is specific for NADPH/NADP(+) as the electron acceptor/donor since it is not active with NADH/NAD(+). In the presence of NADPH, 7beta-HSDH can also reduce dehydrocholate. And is also able to oxidize ursocholate. The protein is 7beta-hydroxysteroid dehydrogenase of Collinsella aerofaciens (strain ATCC 25986 / DSM 3979 / JCM 10188 / KCTC 3647 / NCTC 11838 / VPI 1003).